The primary structure comprises 240 residues: Probable septum site-determining protein MinC (240 aa).

The protein belongs to the MinC family. As to quaternary structure, interacts with MinD and FtsZ.

Functionally, cell division inhibitor that blocks the formation of polar Z ring septums. Rapidly oscillates between the poles of the cell to destabilize FtsZ filaments that have formed before they mature into polar Z rings. Prevents FtsZ polymerization. This chain is Probable septum site-determining protein MinC, found in Acinetobacter baumannii (strain ACICU).